We begin with the raw amino-acid sequence, 236 residues long: Glucosamine-6-phosphate deaminase (236 aa).

D62 functions as the Proton acceptor; for enolization step in the catalytic mechanism. N128 (for ring-opening step) is an active-site residue. The Proton acceptor; for ring-opening step role is filled by H130. The active-site For ring-opening step is the E135.

The protein belongs to the glucosamine/galactosamine-6-phosphate isomerase family. NagB subfamily.

It catalyses the reaction alpha-D-glucosamine 6-phosphate + H2O = beta-D-fructose 6-phosphate + NH4(+). The protein operates within amino-sugar metabolism; N-acetylneuraminate degradation; D-fructose 6-phosphate from N-acetylneuraminate: step 5/5. Catalyzes the reversible isomerization-deamination of glucosamine 6-phosphate (GlcN6P) to form fructose 6-phosphate (Fru6P) and ammonium ion. This Oenococcus oeni (strain ATCC BAA-331 / PSU-1) protein is Glucosamine-6-phosphate deaminase.